A 440-amino-acid polypeptide reads, in one-letter code: Xylose isomerase (440 aa).

Active-site residues include His100 and Asp103. Glu231, Glu267, His270, Asp295, Asp306, Asp308, and Asp338 together coordinate Mg(2+).

This sequence belongs to the xylose isomerase family. In terms of assembly, homotetramer. Requires Mg(2+) as cofactor.

Its subcellular location is the cytoplasm. The enzyme catalyses alpha-D-xylose = alpha-D-xylulofuranose. This is Xylose isomerase from Paraburkholderia xenovorans (strain LB400).